Reading from the N-terminus, the 78-residue chain is Large ribosomal subunit protein bL28 (78 aa).

This sequence belongs to the bacterial ribosomal protein bL28 family.

The polypeptide is Large ribosomal subunit protein bL28 (Methylobacillus flagellatus (strain ATCC 51484 / DSM 6875 / VKM B-1610 / KT)).